We begin with the raw amino-acid sequence, 260 residues long: Small ribosomal subunit protein uS2 (260 aa).

The interval 240–260 is disordered; the sequence is VLKPKLPYQPNRRPYQETVKK.

The protein belongs to the universal ribosomal protein uS2 family.

The chain is Small ribosomal subunit protein uS2 from Phytoplasma australiense.